Reading from the N-terminus, the 2517-residue chain is Serine/threonine-protein kinase ATR (2517 aa).

The HEAT repeat unit spans residues 1178–1214; it reads EPMLEQIVNVLMAGCQHDDSQLQMASAKCLGELGAID. Positions 1509–2066 constitute an FAT domain; that stretch reads LVSRASYNCG…LWMLLPHFKS (558 aa). Serine 1569 is subject to Phosphoserine. A Phosphotyrosine modification is found at tyrosine 1570. Serine 1573 carries the phosphoserine modification. Residue threonine 1575 is modified to Phosphothreonine. Residues 2184-2508 form the PI3K/PI4K catalytic domain; the sequence is FQESVLILRS…EATKVDNLAS (325 aa). The interval 2190 to 2196 is G-loop; the sequence is ILRSAAK. Positions 2360-2368 are catalytic loop; the sequence is GLGDRHGEN. The activation loop stretch occupies residues 2380–2404; it reads HVDFNCLFNQGELLPYPEVVPFRLT. In terms of domain architecture, FATC spans 2485–2517; it reads IPLSTEGQVNFLINEATKVDNLASMYIGWGAFL.

It belongs to the PI3/PI4-kinase family. ATM subfamily. In terms of assembly, interacts with mus304. Requires Mn(2+) as cofactor.

The protein resides in the nucleus. The enzyme catalyses L-seryl-[protein] + ATP = O-phospho-L-seryl-[protein] + ADP + H(+). The catalysed reaction is L-threonyl-[protein] + ATP = O-phospho-L-threonyl-[protein] + ADP + H(+). Serine/threonine protein kinase which activates checkpoint signaling upon genotoxic stresses such as ionizing radiation (IR), ultraviolet light (UV), or DNA replication stalling, thereby acting as a DNA damage sensor. Recognizes the substrate consensus sequence [ST]-Q. Phosphorylates various proteins, which collectively inhibits DNA replication and mitosis and promotes DNA repair and recombination. Phosphorylates grp/CHK1. Phosphorylates 'Ser-137' of histone variant H2AX/H2AV at sites of DNA damage, thereby regulating DNA damage response mechanism. Essential for the DNA damage checkpoint in larval imaginal disks and neuroblasts and for the DNA replication checkpoint in the embryo. Also has an essential role during early nuclear divisions in embryos, where it is required to delay mitosis in response to incomplete DNA replication. Also plays an important role during meiosis, where it may monitor double-strand-break repair during meiotic crossing over, to regulate the progression of prophase I, and to enforce metaphase I delay observed at the end of oogenesis. Involved in telomere maintenance and prevention of telomere fusion; potentially functioning downstream of moi/modigliani. The polypeptide is Serine/threonine-protein kinase ATR (mei-41) (Drosophila melanogaster (Fruit fly)).